The sequence spans 1211 residues: RNA helicase Mov10l1 (1211 aa).

2 disordered regions span residues 340–385 (KENS…GENG) and 674–710 (WNHA…RVGD). 2 stretches are compositionally biased toward polar residues: residues 345–372 (DENI…NNRG) and 674–688 (WNHA…QSTS). The span at 694-710 (TMTDQAEHGTEERRVGD) shows a compositional bias: basic and acidic residues. Position 770 to 777 (770 to 777 (GPPGTGKT)) interacts with ATP. A DEAG box motif is present at residues 886–889 (DEAG). The disordered stretch occupies residues 1192–1211 (DPSYPVVPESTGPEKHQEPS).

Belongs to the DNA2/NAM7 helicase family. SDE3 subfamily. Interacts with PIWIL1. Interacts with PIWIL2. Interacts with PIWIL4. Interacts with HSPA2. Interacts with PLD6. As to expression, specifically expressed in testis.

The protein resides in the cytoplasm. The catalysed reaction is ATP + H2O = ADP + phosphate + H(+). Functionally, ATP-dependent RNA helicase required during spermatogenesis to repress transposable elements and prevent their mobilization, which is essential for germline integrity. Acts via the piRNA metabolic process, which mediates the repression of transposable elements during meiosis by forming complexes composed of piRNAs and Piwi proteins and governs the methylation and subsequent repression of transposons. Involved in the primary piRNA metabolic process. Specifically binds to piRNA precursors and promotes the generation of intermediate piRNA processing fragments that are subsequently loaded to Piwi proteins. Acts via its ATP-dependent RNA helicase activity: displays 5'-3' RNA unwinding activity and probably mediates unwinding and funneling of single-stranded piRNA precursor transcripts to the endonuclease that catalyzes the first cleavage step of piRNA processing to generate piRNA intermediate fragments that are subsequently loaded to Piwi proteins. The polypeptide is RNA helicase Mov10l1 (Homo sapiens (Human)).